Reading from the N-terminus, the 224-residue chain is Putative endoglucanase X (224 aa).

The disordered stretch occupies residues 147–168 (QTQPTPSPSPTPTDSPLVKKGD). Residues 162–224 (PLVKKGDVNL…SILKRILLRN (63 aa)) form the Dockerin domain.

The enzyme catalyses Endohydrolysis of (1-&gt;4)-beta-D-glucosidic linkages in cellulose, lichenin and cereal beta-D-glucans.. In terms of biological role, this enzyme catalyzes the endohydrolysis of 1,4-beta-glucosidic linkages in cellulose, lichenin and cereal beta-D-glucans. This Acetivibrio thermocellus (Hungateiclostridium thermocellum) protein is Putative endoglucanase X (celX).